The sequence spans 125 residues: Small ribosomal subunit protein uS12 (125 aa).

Residue aspartate 89 is modified to 3-methylthioaspartic acid.

Belongs to the universal ribosomal protein uS12 family. As to quaternary structure, part of the 30S ribosomal subunit. Contacts proteins S8 and S17. May interact with IF1 in the 30S initiation complex.

With S4 and S5 plays an important role in translational accuracy. In terms of biological role, interacts with and stabilizes bases of the 16S rRNA that are involved in tRNA selection in the A site and with the mRNA backbone. Located at the interface of the 30S and 50S subunits, it traverses the body of the 30S subunit contacting proteins on the other side and probably holding the rRNA structure together. The combined cluster of proteins S8, S12 and S17 appears to hold together the shoulder and platform of the 30S subunit. This Bordetella avium (strain 197N) protein is Small ribosomal subunit protein uS12.